Here is a 683-residue protein sequence, read N- to C-terminus: Protein kinase C eta type (683 aa).

In terms of domain architecture, C2 spans 1-118 (MSSGTMKFNG…LRTTGASDTF (118 aa)). A phosphoserine; by autocatalysis mark is found at serine 28 and serine 32. Phorbol-ester/DAG-type zinc fingers lie at residues 171 to 222 (GHKF…VTAC) and 245 to 295 (PHKF…APNC). Serine 317 is subject to Phosphoserine. Residues 320–342 (SKLVSRSTLRRQGKESSKEGNGI) form a disordered region. The 260-residue stretch at 355 to 614 (FEFIRVLGKG…EHAILRHPFF (260 aa)) folds into the Protein kinase domain. ATP is bound by residues 361 to 369 (LGKGSFGKV) and lysine 384. Aspartate 479 (proton acceptor) is an active-site residue. Threonine 513 is modified (phosphothreonine; by PDPK1). The AGC-kinase C-terminal domain maps to 615 to 683 (KEIDWAQLNH…FSYVSPELQP (69 aa)). Threonine 656 bears the Phosphothreonine mark. Serine 675 carries the phosphoserine modification.

This sequence belongs to the protein kinase superfamily. AGC Ser/Thr protein kinase family. PKC subfamily. Interacts with FYN. Interacts with RALA. Interacts with DGKQ. Interacts with PRKCH upstream open reading frame 2; the interaction leads to inhibition of kinase activity. As to expression, most abundant in lung, less in heart and skin.

It is found in the cytoplasm. The enzyme catalyses L-seryl-[protein] + ATP = O-phospho-L-seryl-[protein] + ADP + H(+). It carries out the reaction L-threonyl-[protein] + ATP = O-phospho-L-threonyl-[protein] + ADP + H(+). Its activity is regulated as follows. Novel PKCs (PRKCD, PRKCE, PRKCH and PRKCQ) are calcium-insensitive, but activated by diacylglycerol (DAG) and phosphatidylserine. Three specific sites; Thr-513 (activation loop of the kinase domain), Thr-656 (turn motif) and Ser-675 (hydrophobic region), need to be phosphorylated for its full activation. Inhibited by PRKCH upstream open reading frame 2. In terms of biological role, calcium-independent, phospholipid- and diacylglycerol (DAG)-dependent serine/threonine-protein kinase that is involved in the regulation of cell differentiation in keratinocytes and pre-B cell receptor, mediates regulation of epithelial tight junction integrity and foam cell formation, and is required for glioblastoma proliferation and apoptosis prevention in MCF-7 cells. In keratinocytes, binds and activates the tyrosine kinase FYN, which in turn blocks epidermal growth factor receptor (EGFR) signaling and leads to keratinocyte growth arrest and differentiation. Associates with the cyclin CCNE1-CDK2-CDKN1B complex and inhibits CDK2 kinase activity, leading to RB1 dephosphorylation and thereby G1 arrest in keratinocytes. In association with RALA activates actin depolymerization, which is necessary for keratinocyte differentiation. In the pre-B cell receptor signaling, functions downstream of BLNK by up-regulating IRF4, which in turn activates L chain gene rearrangement. Regulates epithelial tight junctions (TJs) by phosphorylating occludin (OCLN) on threonine residues, which is necessary for the assembly and maintenance of TJs. In association with PLD2 and via TLR4 signaling, is involved in lipopolysaccharide (LPS)-induced RGS2 down-regulation and foam cell formation. Upon PMA stimulation, mediates glioblastoma cell proliferation by activating the mTOR pathway, the PI3K/AKT pathway and the ERK1-dependent phosphorylation of ELK1. Involved in the protection of glioblastoma cells from irradiation-induced apoptosis by preventing caspase-9 activation. In camptothecin-treated MCF-7 cells, regulates NF-kappa-B upstream signaling by activating IKBKB, and confers protection against DNA damage-induced apoptosis. Promotes oncogenic functions of ATF2 in the nucleus while blocking its apoptotic function at mitochondria. Phosphorylates ATF2 which promotes its nuclear retention and transcriptional activity and negatively regulates its mitochondrial localization. The sequence is that of Protein kinase C eta type (PRKCH) from Homo sapiens (Human).